The primary structure comprises 688 residues: Hid-1 family protein P19A11.07c (688 aa).

It belongs to the hid-1 family.

It localises to the cytoplasm. It is found in the nucleus. This is Hid-1 family protein P19A11.07c from Schizosaccharomyces pombe (strain 972 / ATCC 24843) (Fission yeast).